The chain runs to 179 residues: Large ribosomal subunit protein uL10 (179 aa).

Belongs to the universal ribosomal protein uL10 family. In terms of assembly, part of the ribosomal stalk of the 50S ribosomal subunit. The N-terminus interacts with L11 and the large rRNA to form the base of the stalk. The C-terminus forms an elongated spine to which L12 dimers bind in a sequential fashion forming a multimeric L10(L12)X complex.

Forms part of the ribosomal stalk, playing a central role in the interaction of the ribosome with GTP-bound translation factors. This chain is Large ribosomal subunit protein uL10, found in Thermomicrobium roseum (strain ATCC 27502 / DSM 5159 / P-2).